The primary structure comprises 127 residues: MNPETMNKTLISISKWGKATGILFIIMGAITALSGAFFFLIGAVPGVLQIISGIFLMRSAREAGQMAEHNSGQSEDLMLENYAKFVKMQGIYLIVSIAVSILAIIAFFIFLMLGIADGLFSDTYSTY.

The helical transmembrane segment at 91-113 threads the bilayer; it reads IYLIVSIAVSILAIIAFFIFLML.

Its subcellular location is the membrane. This is an uncharacterized protein from Bacillus subtilis (strain 168).